The sequence spans 255 residues: tRNA (guanine-N(1)-)-methyltransferase (255 aa).

S-adenosyl-L-methionine-binding positions include G113 and 133 to 138 (IGDYVL).

The protein belongs to the RNA methyltransferase TrmD family. As to quaternary structure, homodimer.

Its subcellular location is the cytoplasm. The catalysed reaction is guanosine(37) in tRNA + S-adenosyl-L-methionine = N(1)-methylguanosine(37) in tRNA + S-adenosyl-L-homocysteine + H(+). In terms of biological role, specifically methylates guanosine-37 in various tRNAs. The chain is tRNA (guanine-N(1)-)-methyltransferase from Enterobacter sp. (strain 638).